Here is a 248-residue protein sequence, read N- to C-terminus: Pyridoxine 5'-phosphate synthase (248 aa).

Asn-12 provides a ligand contact to 3-amino-2-oxopropyl phosphate. Residue Asp-14–His-15 coordinates 1-deoxy-D-xylulose 5-phosphate. Arg-23 serves as a coordination point for 3-amino-2-oxopropyl phosphate. His-48 functions as the Proton acceptor in the catalytic mechanism. Residues Arg-50 and His-55 each contribute to the 1-deoxy-D-xylulose 5-phosphate site. Residue Glu-75 is the Proton acceptor of the active site. A 1-deoxy-D-xylulose 5-phosphate-binding site is contributed by Thr-105. The Proton donor role is filled by His-196. Residues Gly-197 and Gly-218–His-219 each bind 3-amino-2-oxopropyl phosphate.

Belongs to the PNP synthase family. Homooctamer; tetramer of dimers.

It localises to the cytoplasm. The catalysed reaction is 3-amino-2-oxopropyl phosphate + 1-deoxy-D-xylulose 5-phosphate = pyridoxine 5'-phosphate + phosphate + 2 H2O + H(+). It functions in the pathway cofactor biosynthesis; pyridoxine 5'-phosphate biosynthesis; pyridoxine 5'-phosphate from D-erythrose 4-phosphate: step 5/5. Its function is as follows. Catalyzes the complicated ring closure reaction between the two acyclic compounds 1-deoxy-D-xylulose-5-phosphate (DXP) and 3-amino-2-oxopropyl phosphate (1-amino-acetone-3-phosphate or AAP) to form pyridoxine 5'-phosphate (PNP) and inorganic phosphate. This is Pyridoxine 5'-phosphate synthase from Pseudomonas aeruginosa (strain LESB58).